The following is a 462-amino-acid chain: L-seryl-tRNA(Sec) selenium transferase (462 aa).

Lysine 292 bears the N6-(pyridoxal phosphate)lysine mark.

The protein belongs to the SelA family. Pyridoxal 5'-phosphate is required as a cofactor.

Its subcellular location is the cytoplasm. The catalysed reaction is L-seryl-tRNA(Sec) + selenophosphate + H(+) = L-selenocysteinyl-tRNA(Sec) + phosphate. It functions in the pathway aminoacyl-tRNA biosynthesis; selenocysteinyl-tRNA(Sec) biosynthesis; selenocysteinyl-tRNA(Sec) from L-seryl-tRNA(Sec) (bacterial route): step 1/1. In terms of biological role, converts seryl-tRNA(Sec) to selenocysteinyl-tRNA(Sec) required for selenoprotein biosynthesis. This is L-seryl-tRNA(Sec) selenium transferase from Geotalea daltonii (strain DSM 22248 / JCM 15807 / FRC-32) (Geobacter daltonii).